The primary structure comprises 481 residues: MNTVSDLNNFVATRCAIADISLSDFGRKEIAIAETEMPGLIAIRDEFAAQQPLRGARITGSLHMTIQTAVLIETLEALGAEVQWASCNIFSTQDHAAAAIAANGTPVFAIKGETLEQYWDFTHRIFEWADGGYTNMILDDGGDATLLLHLGARAEKDQACLNNPTSEEETILFAAIKKKLAQDPTWYSTRLEKVKGVTEETTTGVHRLYQMFAKGELKFPAINVNDSVTKSKFDNLYGCRESLVDAIKRATDVMVAGKVAVVCGYGDVGKGSAQALRALSAQVWVTEVDPICALQAAMEGYRVVTMDYAADKADIFVSATGNYHVITHDHMAKMKNQAIVCNIGHFDNEIDVAGIEKYKWEEIKPQVDHVIFPAANGKPEKRIIILAKGRLVNLGCGTGHPSYVMSSSFANQVIAQIELWNAVGTDKYPIGVYTLPKHLDEKVARLQLKTLNAELTVLSDQQASYIGVTKEGPYKADHYRY.

Substrate-binding residues include Thr-65, Asp-140, and Glu-200. 201–203 is an NAD(+) binding site; sequence TTT. Substrate-binding residues include Lys-230 and Asp-234. NAD(+) contacts are provided by residues Asn-235, 264–269, Glu-287, Asn-322, 343–345, and Asn-393; these read GYGDVG and IGH.

The protein belongs to the adenosylhomocysteinase family. The cofactor is NAD(+).

The protein resides in the cytoplasm. It catalyses the reaction S-adenosyl-L-homocysteine + H2O = L-homocysteine + adenosine. Its pathway is amino-acid biosynthesis; L-homocysteine biosynthesis; L-homocysteine from S-adenosyl-L-homocysteine: step 1/1. In terms of biological role, may play a key role in the regulation of the intracellular concentration of adenosylhomocysteine. This chain is Adenosylhomocysteinase, found in Polynucleobacter asymbioticus (strain DSM 18221 / CIP 109841 / QLW-P1DMWA-1) (Polynucleobacter necessarius subsp. asymbioticus).